Consider the following 159-residue polypeptide: Intron-encoded endonuclease ai4 (159 aa).

The protein belongs to the LAGLIDADG endonuclease family.

It is found in the mitochondrion. In terms of biological role, mitochondrial DNA endonuclease involved in intron homing. The protein is Intron-encoded endonuclease ai4 (ai4) of Dictyostelium discoideum (Social amoeba).